Reading from the N-terminus, the 50-residue chain is Small, acid-soluble spore protein P (50 aa).

Residues 1–50 (MSKRKMGPKQQKNPELPKSPEQPYGEPLSGSKKEKKANHSGQKHNPHHGL) are disordered. Residues 33–50 (KEKKANHSGQKHNPHHGL) show a composition bias toward basic residues.

This sequence belongs to the SspP family.

The protein resides in the spore core. This is Small, acid-soluble spore protein P from Oceanobacillus iheyensis (strain DSM 14371 / CIP 107618 / JCM 11309 / KCTC 3954 / HTE831).